A 361-amino-acid chain; its full sequence is Ribosomal RNA large subunit methyltransferase M (361 aa).

Residues serine 187, 220–223, aspartate 239, aspartate 259, and aspartate 276 contribute to the S-adenosyl-L-methionine site; that span reads CPGG. Lysine 305 functions as the Proton acceptor in the catalytic mechanism.

It belongs to the class I-like SAM-binding methyltransferase superfamily. RNA methyltransferase RlmE family. RlmM subfamily. Monomer.

The protein localises to the cytoplasm. The enzyme catalyses cytidine(2498) in 23S rRNA + S-adenosyl-L-methionine = 2'-O-methylcytidine(2498) in 23S rRNA + S-adenosyl-L-homocysteine + H(+). Functionally, catalyzes the 2'-O-methylation at nucleotide C2498 in 23S rRNA. In Shewanella sp. (strain MR-4), this protein is Ribosomal RNA large subunit methyltransferase M.